We begin with the raw amino-acid sequence, 581 residues long: Chaperonin GroEL 1 (581 aa).

Residues 29–32 (TIGP), 86–90 (DGTTT), G413, and D492 contribute to the ATP site. The disordered stretch occupies residues 522-541 (PEPEAAGPGGPGADPMGGMG). Residues 528–541 (GPGGPGADPMGGMG) are compositionally biased toward gly residues.

The protein belongs to the chaperonin (HSP60) family. As to quaternary structure, forms a cylinder of 14 subunits composed of two heptameric rings stacked back-to-back. Interacts with the co-chaperonin GroES.

Its subcellular location is the cytoplasm. It carries out the reaction ATP + H2O + a folded polypeptide = ADP + phosphate + an unfolded polypeptide.. Together with its co-chaperonin GroES, plays an essential role in assisting protein folding. The GroEL-GroES system forms a nano-cage that allows encapsulation of the non-native substrate proteins and provides a physical environment optimized to promote and accelerate protein folding. The polypeptide is Chaperonin GroEL 1 (Prochlorococcus marinus (strain MIT 9301)).